A 400-amino-acid chain; its full sequence is ATP phosphoribosyltransferase regulatory subunit (400 aa).

Belongs to the class-II aminoacyl-tRNA synthetase family. HisZ subfamily. Heteromultimer composed of HisG and HisZ subunits.

It localises to the cytoplasm. It functions in the pathway amino-acid biosynthesis; L-histidine biosynthesis; L-histidine from 5-phospho-alpha-D-ribose 1-diphosphate: step 1/9. In terms of biological role, required for the first step of histidine biosynthesis. May allow the feedback regulation of ATP phosphoribosyltransferase activity by histidine. The sequence is that of ATP phosphoribosyltransferase regulatory subunit from Hahella chejuensis (strain KCTC 2396).